The primary structure comprises 205 residues: uncharacterized protein (205 aa).

This is an uncharacterized protein from Sinorhizobium fredii (strain NBRC 101917 / NGR234).